The following is a 154-amino-acid chain: 17.6 kDa class I heat shock protein (154 aa).

A sHSP domain is found at 40-154; sequence ETSAFANTRI…PDVKSIEISG (115 aa).

Belongs to the small heat shock protein (HSP20) family. Forms oligomeric structures.

It localises to the cytoplasm. This chain is 17.6 kDa class I heat shock protein, found in Solanum peruvianum (Peruvian tomato).